Consider the following 508-residue polypeptide: MRVSLSLTSRCRINFIRERILENSSNSTTETQVKRALKSRHVSMIALGGTIGTGLFLTSGDVIHTAGPFGALTAYVLIGAMVYFLMTSLGEMATYLPTSGSFSDYGTRYVDPAFGFALGWNYWLNWAITVAVDLTAVALCIKFWLPDVPSWIFSLIALIIVFSINALSVKTFGETEYWLSAIKITVVVLFLIIGFLSIFGIMGGHIDVAKNLSVGNHGFVGGLGSFTTGGGILGVLLVAGFSFQGTELLGITAGEAENPEKSIPKAMNSIFWRILVFYILSIFVMAAIIPFTDPHLVGGNSAAQSPFTIVFERVGFSIAASIMNAVVLTSVVSAANSGMYASTRMLYSLAKDGGAPKIFSKTSKNGIPFIALLATTAVALLTFLTSIYGVSFFTLLVSASGLTGFIAWIGIAISHFRFRRAYVAQGKDVKKLPYHAKLFPFGPILALIMTVLVTLGQDPMLLFGKTWVQGVVMYAAIPLFFILYLGYKFKNKTKLIPLKDVDLSRHKD.

12 helical membrane-spanning segments follow: residues 43–63 (SMIALGGTIGTGLFLTSGDVI), 66–86 (AGPFGALTAYVLIGAMVYFLM), 112–132 (PAFGFALGWNYWLNWAITVAV), 144–164 (WLPDVPSWIFSLIALIIVFSI), 184–204 (ITVVVLFLIIGFLSIFGIMGG), 219–239 (FVGGLGSFTTGGGILGVLLVA), 270–290 (IFWRILVFYILSIFVMAAIIP), 314–334 (VGFSIAASIMNAVVLTSVVSA), 367–387 (IPFIALLATTAVALLTFLTSI), 393–413 (FTLLVSASGLTGFIAWIGIAI), 436–456 (AKLFPFGPILALIMTVLVTLG), and 467–487 (WVQGVVMYAAIPLFFILYLGY).

This sequence belongs to the amino acid-polyamine-organocation (APC) superfamily. Amino acid transporter (AAT) (TC 2.A.3.1) family.

It is found in the cell membrane. The enzyme catalyses L-lysine(out) + H(+)(out) = L-lysine(in) + H(+)(in). In terms of biological role, permease involved in lysine uptake. In Lactococcus lactis subsp. cremoris (strain MG1363), this protein is Lysine-specific permease LysP.